A 1391-amino-acid chain; its full sequence is DNA-directed RNA polymerase subunit beta'' (1391 aa).

Residues Cys224, Cys295, Cys302, and Cys305 each contribute to the Zn(2+) site.

Belongs to the RNA polymerase beta' chain family. RpoC2 subfamily. In terms of assembly, in plastids the minimal PEP RNA polymerase catalytic core is composed of four subunits: alpha, beta, beta', and beta''. When a (nuclear-encoded) sigma factor is associated with the core the holoenzyme is formed, which can initiate transcription. Zn(2+) is required as a cofactor.

The protein localises to the plastid. Its subcellular location is the chloroplast. It carries out the reaction RNA(n) + a ribonucleoside 5'-triphosphate = RNA(n+1) + diphosphate. In terms of biological role, DNA-dependent RNA polymerase catalyzes the transcription of DNA into RNA using the four ribonucleoside triphosphates as substrates. In Buxus microphylla (Littleleaf boxwood), this protein is DNA-directed RNA polymerase subunit beta''.